The sequence spans 699 residues: Elongation factor G (699 aa).

Residues 8-283 (EHIRNIGICA…AIVDFLPSPI (276 aa)) form the tr-type G domain. Residues 17–24 (AHIDAGKT), 81–85 (DTPGH), and 135–138 (NKMD) each bind GTP.

The protein belongs to the TRAFAC class translation factor GTPase superfamily. Classic translation factor GTPase family. EF-G/EF-2 subfamily.

It is found in the cytoplasm. Its function is as follows. Catalyzes the GTP-dependent ribosomal translocation step during translation elongation. During this step, the ribosome changes from the pre-translocational (PRE) to the post-translocational (POST) state as the newly formed A-site-bound peptidyl-tRNA and P-site-bound deacylated tRNA move to the P and E sites, respectively. Catalyzes the coordinated movement of the two tRNA molecules, the mRNA and conformational changes in the ribosome. The polypeptide is Elongation factor G (Rickettsia typhi (strain ATCC VR-144 / Wilmington)).